Reading from the N-terminus, the 178-residue chain is Redox-sensing transcriptional repressor Rex (178 aa).

G59 to G64 serves as a coordination point for NAD(+).

The protein belongs to the transcriptional regulatory Rex family. As to quaternary structure, homodimer.

Its subcellular location is the cytoplasm. In terms of biological role, modulates transcription in response to changes in cellular NADH/NAD(+) redox state. This chain is Redox-sensing transcriptional repressor Rex, found in Streptococcus suis.